Here is a 217-residue protein sequence, read N- to C-terminus: 3,4-dihydroxy-2-butanone 4-phosphate synthase (217 aa).

Residues 37–38, aspartate 42, 150–154, and glutamate 174 contribute to the D-ribulose 5-phosphate site; these read RE and RRGHT. Glutamate 38 is a binding site for Mg(2+). Residue histidine 153 participates in Mg(2+) binding.

Belongs to the DHBP synthase family. Homodimer. Mg(2+) serves as cofactor. Mn(2+) is required as a cofactor.

It catalyses the reaction D-ribulose 5-phosphate = (2S)-2-hydroxy-3-oxobutyl phosphate + formate + H(+). It participates in cofactor biosynthesis; riboflavin biosynthesis; 2-hydroxy-3-oxobutyl phosphate from D-ribulose 5-phosphate: step 1/1. In terms of biological role, catalyzes the conversion of D-ribulose 5-phosphate to formate and 3,4-dihydroxy-2-butanone 4-phosphate. This Shewanella sp. (strain W3-18-1) protein is 3,4-dihydroxy-2-butanone 4-phosphate synthase.